The primary structure comprises 312 residues: Ribosomal protein L11 methyltransferase (312 aa).

S-adenosyl-L-methionine contacts are provided by Thr-162, Gly-183, Asp-205, and Asn-248.

The protein belongs to the methyltransferase superfamily. PrmA family.

The protein localises to the cytoplasm. It carries out the reaction L-lysyl-[protein] + 3 S-adenosyl-L-methionine = N(6),N(6),N(6)-trimethyl-L-lysyl-[protein] + 3 S-adenosyl-L-homocysteine + 3 H(+). Its function is as follows. Methylates ribosomal protein L11. The polypeptide is Ribosomal protein L11 methyltransferase (Bacillus cereus (strain ATCC 10987 / NRS 248)).